The chain runs to 259 residues: MEVVILGGSRPIGKLAADAIEELLRRKPDAVLGLATGSSPLPVYEELAARHATGLDFSRASGFALDEYVGLPDGHPEQYRNVIRREFTDRINIEPANVHSPDGAATDIPAACDAYEAAIAAAGGVDLQLLGVGTDGHIGFNEPGSSFASRTRIKSLIEQTRKDNARFFTSLADVPHHVITQGLGTIMDARHVILIATGAQKAQAVRDFVEGPVAAICPASVLQFHPHATVLVDEAAASALKLADFYRHTYDNKPSWQGI.

Asp-66 acts as the Proton acceptor; for enolization step in catalysis. Asp-135 acts as the For ring-opening step in catalysis. His-137 acts as the Proton acceptor; for ring-opening step in catalysis. Glu-142 functions as the For ring-opening step in the catalytic mechanism.

Belongs to the glucosamine/galactosamine-6-phosphate isomerase family. NagB subfamily.

The catalysed reaction is alpha-D-glucosamine 6-phosphate + H2O = beta-D-fructose 6-phosphate + NH4(+). Its pathway is amino-sugar metabolism; N-acetylneuraminate degradation; D-fructose 6-phosphate from N-acetylneuraminate: step 5/5. Catalyzes the reversible isomerization-deamination of glucosamine 6-phosphate (GlcN6P) to form fructose 6-phosphate (Fru6P) and ammonium ion. In Pseudarthrobacter chlorophenolicus (strain ATCC 700700 / DSM 12829 / CIP 107037 / JCM 12360 / KCTC 9906 / NCIMB 13794 / A6) (Arthrobacter chlorophenolicus), this protein is Glucosamine-6-phosphate deaminase.